The chain runs to 273 residues: Bis(5'-nucleosyl)-tetraphosphatase, symmetrical (273 aa).

The protein belongs to the Ap4A hydrolase family.

It catalyses the reaction P(1),P(4)-bis(5'-adenosyl) tetraphosphate + H2O = 2 ADP + 2 H(+). Its function is as follows. Hydrolyzes diadenosine 5',5'''-P1,P4-tetraphosphate to yield ADP. The polypeptide is Bis(5'-nucleosyl)-tetraphosphatase, symmetrical (Aromatoleum aromaticum (strain DSM 19018 / LMG 30748 / EbN1) (Azoarcus sp. (strain EbN1))).